The following is a 199-amino-acid chain: FMN-dependent NADH:quinone oxidoreductase (199 aa).

FMN contacts are provided by residues Ser-10, 16 to 18 (SVS), and 96 to 99 (MYNF).

Belongs to the azoreductase type 1 family. As to quaternary structure, homodimer. FMN serves as cofactor.

It carries out the reaction 2 a quinone + NADH + H(+) = 2 a 1,4-benzosemiquinone + NAD(+). The enzyme catalyses N,N-dimethyl-1,4-phenylenediamine + anthranilate + 2 NAD(+) = 2-(4-dimethylaminophenyl)diazenylbenzoate + 2 NADH + 2 H(+). In terms of biological role, quinone reductase that provides resistance to thiol-specific stress caused by electrophilic quinones. Also exhibits azoreductase activity. Catalyzes the reductive cleavage of the azo bond in aromatic azo compounds to the corresponding amines. The chain is FMN-dependent NADH:quinone oxidoreductase from Azotobacter vinelandii (strain DJ / ATCC BAA-1303).